A 176-amino-acid chain; its full sequence is Transcriptional repressor MprA (176 aa).

Positions 26–160 (EILLTRLCMH…LEQITRKLLS (135 aa)) constitute an HTH marR-type domain.

In terms of biological role, negative regulator of the multidrug operon emrAB. The sequence is that of Transcriptional repressor MprA (mprA) from Escherichia coli O157:H7.